We begin with the raw amino-acid sequence, 291 residues long: Shikimate dehydrogenase (NADP(+)) (291 aa).

Shikimate contacts are provided by residues 26-28 (SLS) and S73. Catalysis depends on K77, which acts as the Proton acceptor. N98 and D113 together coordinate shikimate. NADP(+) is bound by residues 137-141 (GAGGA) and V238. Y240 contributes to the shikimate binding site. G261 lines the NADP(+) pocket.

This sequence belongs to the shikimate dehydrogenase family. Homodimer.

The catalysed reaction is shikimate + NADP(+) = 3-dehydroshikimate + NADPH + H(+). Its pathway is metabolic intermediate biosynthesis; chorismate biosynthesis; chorismate from D-erythrose 4-phosphate and phosphoenolpyruvate: step 4/7. Its function is as follows. Involved in the biosynthesis of the chorismate, which leads to the biosynthesis of aromatic amino acids. Catalyzes the reversible NADPH linked reduction of 3-dehydroshikimate (DHSA) to yield shikimate (SA). This chain is Shikimate dehydrogenase (NADP(+)), found in Listeria innocua serovar 6a (strain ATCC BAA-680 / CLIP 11262).